The following is a 487-amino-acid chain: MKAQPKASHFIDGEYVEDTAGTVIESIYPATGEVIARLHAATPDIVEKAIAAAKRAQPEWAAMSPTARGRILKRAAEIMRERNRELSELETLDTGKPIQETIVADPTSGADSFEFFGGIAAAALNGDYIPLGGDFAYTKRVPLGVCVGIGAWNYPQQIACWKGAPALAAGNSMVFKPSENTPLGALKIAEILIEAGLPKGLYNVIQGDRSTGPLLVNHPDVAKVSLTGSVPTGKKVAAAAAAELKHVTMELGGKSPLIVFDDADLESAIGGAMLGNFYSTGQVCSNGTRVFVQRKIKDAFLARLKERTEAIVIGDPMDEATQLGPMVSKAQRDKVLSYIEQGKAEGARLVTGGGIPNAVNTEGTYIQPTVFADVTDEMTIAREEIFGPVMCVLDFDDEAEVVARANATEFGLSAGVFTADLTRAHRVVDQLEAGTLWINTYNLAPVEIPFGGSKQSGFGRENSVAALNHYTELKTVYVGMGKVEAPY.

S26, I27, and D93 together coordinate K(+). 150-152 (GAW) is a binding site for NAD(+). Residue K162 is the Charge relay system of the active site. NAD(+) is bound by residues 176–179 (KPSE) and 229–232 (SVPT). L244 is a K(+) binding site. The active-site Proton acceptor is E250. NAD(+) is bound by residues G252, C284, and E384. The Nucleophile role is filled by C284. At C284 the chain carries Cysteine sulfenic acid (-SOH). Positions 454 and 457 each coordinate K(+). E461 serves as the catalytic Charge relay system.

It belongs to the aldehyde dehydrogenase family. Dimer of dimers. K(+) serves as cofactor.

The catalysed reaction is betaine aldehyde + NAD(+) + H2O = glycine betaine + NADH + 2 H(+). It functions in the pathway amine and polyamine biosynthesis; betaine biosynthesis via choline pathway; betaine from betaine aldehyde: step 1/1. Functionally, involved in the biosynthesis of the osmoprotectant glycine betaine. Catalyzes the irreversible oxidation of betaine aldehyde to the corresponding acid. The protein is Betaine aldehyde dehydrogenase of Sinorhizobium fredii (strain NBRC 101917 / NGR234).